The chain runs to 271 residues: Ribosomal RNA small subunit methyltransferase A (271 aa).

S-adenosyl-L-methionine contacts are provided by Asn28, Leu30, Gly54, Glu75, Asp99, and Asn117.

The protein belongs to the class I-like SAM-binding methyltransferase superfamily. rRNA adenine N(6)-methyltransferase family. RsmA subfamily.

It localises to the cytoplasm. It carries out the reaction adenosine(1518)/adenosine(1519) in 16S rRNA + 4 S-adenosyl-L-methionine = N(6)-dimethyladenosine(1518)/N(6)-dimethyladenosine(1519) in 16S rRNA + 4 S-adenosyl-L-homocysteine + 4 H(+). In terms of biological role, specifically dimethylates two adjacent adenosines (A1518 and A1519) in the loop of a conserved hairpin near the 3'-end of 16S rRNA in the 30S particle. May play a critical role in biogenesis of 30S subunits. This is Ribosomal RNA small subunit methyltransferase A from Thermus thermophilus (strain ATCC BAA-163 / DSM 7039 / HB27).